Here is a 257-residue protein sequence, read N- to C-terminus: TLC domain-containing protein 3A (257 aa).

Helical transmembrane passes span 1–21 (MLLTLAGGALFFPGLFALCTW), 42–62 (LVSSVHAVLATGSGIVIIRSC), 77–97 (VWFLIPYMIYDSYAMYLCEWC), 113–135 (FLSRNRLMITHHAVILFVLVPVA), 142–162 (LGDFFVGCIFTAELSTPFVSL), 181–201 (GILTLATFLSCRILLFPFMYW), and 220–240 (FYCNVANAFLVAPQIYWFCLL). In terms of domain architecture, TLC spans 33–249 (TDCVMISTRL…LCRKAVRLFD (217 aa)).

As to quaternary structure, interacts with GGT7 isoform 3 and SLC3A2. As to expression, highly expressed in pancreas. Detected at intermediate levels in heart, placenta and kidney, and at low levels in brain, liver and skeletal muscle. Not detected in normal lung.

It is found in the cell membrane. The protein is TLC domain-containing protein 3A of Homo sapiens (Human).